A 155-amino-acid chain; its full sequence is Egg cell-secreted protein 1.5 (155 aa).

A signal peptide spans 1–32; the sequence is MATKSTSKPLLLSFLMMSYLISTFHVITVAEG.

This sequence belongs to the plant egg cell-secreted peptide family. Restricted to female reproductive tissues, specifically accumulating in storage vesicles of the unfertilized egg cell.

The protein resides in the cytoplasmic vesicle. Its subcellular location is the secreted. In terms of biological role, involved in the regulation of gamete interactions during the double fertilization and to prevent multiple-pollen tube attraction; mediates the redistribution of the gamete fusogen HAP2/GCS1 to the cell surface after secretion upon sperm arrival. The protein is Egg cell-secreted protein 1.5 (EC1.5) of Arabidopsis thaliana (Mouse-ear cress).